Reading from the N-terminus, the 125-residue chain is MRHYEIVFMVHPDQSEQVPGMIERYTGSVKEAGGQIHRLEDWGRRQLAYPINKLHKAHYVLMNVEAPQEVIDELETTFRYNDAVLRNVIIRTKHAVTEASPMVKAREERKPLTEVENNDFEDAEE.

The segment at 99–125 is disordered; that stretch reads ASPMVKAREERKPLTEVENNDFEDAEE. Residues 104 to 113 are compositionally biased toward basic and acidic residues; the sequence is KAREERKPLT. A compositionally biased stretch (acidic residues) spans 116–125; it reads ENNDFEDAEE.

The protein belongs to the bacterial ribosomal protein bS6 family.

Its function is as follows. Binds together with bS18 to 16S ribosomal RNA. This Histophilus somni (strain 2336) (Haemophilus somnus) protein is Small ribosomal subunit protein bS6.